A 192-amino-acid polypeptide reads, in one-letter code: Putative acetyltransferase YjbC (192 aa).

The 139-residue stretch at 1–139 (MNWYEKLSEY…MEILYWSPKT (139 aa)) folds into the N-acetyltransferase domain.

The protein resides in the cytoplasm. The sequence is that of Putative acetyltransferase YjbC (yjbC) from Bacillus subtilis (strain 168).